A 215-amino-acid polypeptide reads, in one-letter code: Ependymin-2 (215 aa).

Residues 1–20 form the signal peptide; it reads MHTVKLLCVVFSCLCAVAWA. N-linked (GlcNAc...) asparagine glycosylation is found at N71 and N94.

It belongs to the ependymin family. In terms of assembly, forms disulfide-linked dimers. Different glycosylation variants are known as EPD-beta and EPD-gamma. In terms of processing, binds calcium through the terminal sialic acids. As to expression, EPDs are synthesized in the meninx and secreted in the cerebrospinal fluid.

The protein resides in the secreted. Its function is as follows. May play a role in neural plasticity. May be involved during axon regeneration. In Carassius auratus (Goldfish), this protein is Ependymin-2 (epd2).